Reading from the N-terminus, the 284-residue chain is BES1/BZR1 homolog protein 3 (284 aa).

Disordered stretches follow at residues 1–21 (MTSGTRTPTWKERENNKRRER) and 85–116 (GSTSASPCSSYQHSPRASYNPSPSSSSFPSPT). Positions 6–88 (RTPTWKEREN…RMDLMNGSTS (83 aa)) are required for DNA-binding. A compositionally biased stretch (polar residues) spans 85-97 (GSTSASPCSSYQH). Residues 98-114 (SPRASYNPSPSSSSFPS) show a composition bias toward low complexity. Residue Thr153 is modified to Phosphothreonine.

It belongs to the BZR/LAT61 family. Post-translationally, phosphorylated. Phosphorylation increases protein degradation.

The sequence is that of BES1/BZR1 homolog protein 3 (BEH3) from Arabidopsis thaliana (Mouse-ear cress).